The following is an 88-amino-acid chain: Protein ORGAN SIZE RELATED 1 (88 aa).

Positions 25-76 (ITARSVALLLFLSLLLLILPPFLPPLPPPPATLLLLPLLLMILLIFLAFSPS) are organ Size Related (OSR) domain. 2 helical membrane-spanning segments follow: residues 30–50 (VALLLFLSLLLLILPPFLPPL) and 53–73 (PPATLLLLPLLLMILLIFLAF).

It belongs to the plant organ size related (OSR) protein family. In terms of tissue distribution, mostly expressed in flowers, and, to a lower extent, in leaves and cotyledons.

The protein localises to the membrane. Its subcellular location is the endoplasmic reticulum. It localises to the nucleus. It is found in the cytoplasm. Functionally, together with ARGOS and ARL, regulates organ growth and final organ size. Promotes both cell expansion and proliferation-dependent organ growth, in an ANT-dependent manner. The chain is Protein ORGAN SIZE RELATED 1 from Arabidopsis thaliana (Mouse-ear cress).